The primary structure comprises 409 residues: Ubiquitin-associated domain-containing protein 1 (409 aa).

Met-1 is modified (N-acetylmethionine). The 85-residue stretch at 14–98 folds into the Ubiquitin-like domain; sequence LRLHICAADG…LLLIKKRVPS (85 aa). The interval 101–122 is disordered; that stretch reads PKMADVSAEEKKKQEQKAPDKD. A compositionally biased stretch (basic and acidic residues) spans 108-122; sequence AEEKKKQEQKAPDKD. One can recognise a UBA 1 domain in the interval 187-231; it reads DEDERVDETALRQLTEMGFPESRASKALRLNHMSVPQAMEWLIEH. The tract at residues 239-273 is disordered; it reads TPLPGHAAQAGASAAATTSSTSSEAAVGTSVEDEE. Residues 245–268 are compositionally biased toward low complexity; sequence AAQAGASAAATTSSTSSEAAVGTS. The 41-residue stretch at 292 to 332 folds into the UBA 2 domain; sequence RADARAVISLMEMGFDEKEVIDALRVNNNQQNAACEWLLGD. One can recognise an STI1 domain in the interval 357 to 396; the sequence is NPVVQLGLTNPKTLLAFEDMLENPLNSTQWMNDPETGPVM.

Component of the KPC complex composed of RNF123/KPC1 and UBAC1/KPC2. Interacts (via ubiquitin-like domain) with RNF123. Interacts (via ubiquitin-like and UBA domains) with the proteasome via its N-terminal domain.

The protein resides in the cytoplasm. The protein operates within protein modification; protein ubiquitination. Non-catalytic component of the KPC complex, a E3 ubiquitin-protein ligase complex that mediates polyubiquitination of target proteins, such as CDKN1B and NFKB1. The KPC complex catalyzes polyubiquitination and proteasome-mediated degradation of CDKN1B during G1 phase of the cell cycle. The KPC complex also acts as a key regulator of the NF-kappa-B signaling by promoting maturation of the NFKB1 component of NF-kappa-B by catalyzing ubiquitination of the NFKB1 p105 precursor. Within the KPC complex, UBAC1 acts as an adapter that promotes the transfer of target proteins that have been polyubiquitinated by RNF123/KPC1 to the 26S proteasome. The protein is Ubiquitin-associated domain-containing protein 1 (Ubac1) of Mus musculus (Mouse).